A 525-amino-acid polypeptide reads, in one-letter code: Lymphocyte activation gene 3 protein (525 aa).

An N-terminal signal peptide occupies residues 1 to 22 (MWEAQFLGLLFLQPLWVAPVKP). Over 23-450 (LQPGAEVPVV…APGALPAGHL (428 aa)) the chain is Extracellular. An Ig-like V-type domain is found at 37–167 (GAPAQLPCSP…LSCRLRLRLG (131 aa)). An interaction with FGL1 region spans residues 37–252 (GAPAQLPCSP…LTYRDGFNVS (216 aa)). Residues Cys-44 and Cys-160 are joined by a disulfide bond. The segment at 62–97 (TWQHQPDSGPPAAAPGHPLAPGPHPAAPSSWGPRPR) is disordered. Pro residues predominate over residues 69–87 (SGPPAAAPGHPLAPGPHPA). Residues 168–252 (QASMTASPPG…LTYRDGFNVS (85 aa)) form the Ig-like C2-type 1 domain. The N-linked (GlcNAc...) asparagine glycan is linked to Asn-188. A disulfide bridge links Cys-189 with Cys-241. 2 N-linked (GlcNAc...) asparagine glycosylation sites follow: Asn-250 and Asn-256. Ig-like C2-type domains lie at 265-343 (PTPL…QQLN) and 348-419 (LAII…QGER). A disulfide bridge links Cys-282 with Cys-333. The N-linked (GlcNAc...) asparagine glycan is linked to Asn-343. The cysteines at positions 369 and 412 are disulfide-linked. Residues 429-450 (ELSSPGAQRSGRAPGALPAGHL) are connecting peptide. The chain crosses the membrane as a helical span at residues 451 to 471 (LLFLILGVLSLLLLVTGAFGF). Residues 472 to 525 (HLWRRQWRPRRFSALEQGIHPPQAQSKIEELEQEPEPEPEPEPEPEPEPEPEQL) lie on the Cytoplasmic side of the membrane. Residues 487-525 (EQGIHPPQAQSKIEELEQEPEPEPEPEPEPEPEPEPEQL) are disordered. Residues 498–503 (KIEELE) carry the KIEELE motif motif. The interval 501–524 (ELEQEPEPEPEPEPEPEPEPEPEQ) is 12 X 2 AA tandem repeats of E-X. A compositionally biased stretch (acidic residues) spans 502-525 (LEQEPEPEPEPEPEPEPEPEPEQL).

Belongs to the LAG3 family. In terms of assembly, interacts with MHC class II (MHC-II); selectively recognizes stable complexes of peptide and MHC-II. Interacts with FGL1 (via the Fibrinogen C-terminal domain). Proteolytically cleaved by ADAM10 and ADAM17 within the connecting peptide region, leading to release of Secreted lymphocyte activation gene 3 protein (sLAG-3). ADAM10 mediates constitutive cleavage, but cleavage increases following T-cell activation, whereas shedding by ADAM17 is induced by TCR signaling in a PRKCQ-dependent manner. In terms of tissue distribution, primarily expressed in activated T-cells and a subset of natural killer (NK) cells.

The protein localises to the cell membrane. It localises to the secreted. Lymphocyte activation gene 3 protein: Inhibitory receptor on antigen activated T-cells. Delivers inhibitory signals upon binding to ligands, such as FGL1. FGL1 constitutes a major ligand of LAG3 and is responsible for LAG3 T-cell inhibitory function. Following TCR engagement, LAG3 associates with CD3-TCR in the immunological synapse and directly inhibits T-cell activation. May inhibit antigen-specific T-cell activation in synergy with PDCD1/PD-1, possibly by acting as a coreceptor for PDCD1/PD-1. Negatively regulates the proliferation, activation, effector function and homeostasis of both CD8(+) and CD4(+) T-cells. Also mediates immune tolerance: constitutively expressed on a subset of regulatory T-cells (Tregs) and contributes to their suppressive function. Also acts as a negative regulator of plasmacytoid dendritic cell (pDCs) activation. Binds MHC class II (MHC-II); the precise role of MHC-II-binding is however unclear. Its function is as follows. May function as a ligand for MHC class II (MHC-II) on antigen-presenting cells (APC), promoting APC activation/maturation and driving Th1 immune response. In Homo sapiens (Human), this protein is Lymphocyte activation gene 3 protein.